The following is a 464-amino-acid chain: Siroheme synthase (464 aa).

The tract at residues 1–203 is precorrin-2 dehydrogenase /sirohydrochlorin ferrochelatase; that stretch reads MEFLPLFHNL…GQGAEAERLL (203 aa). NAD(+)-binding positions include 22-23 and 43-44; these read EI and PE. Phosphoserine is present on Ser128. Residues 216-464 are uroporphyrinogen-III C-methyltransferase; that stretch reads GEVYLVGAGP…AWFEGAQATV (249 aa). S-adenosyl-L-methionine is bound at residue Pro225. Residue Asp248 is the Proton acceptor of the active site. The active-site Proton donor is the Lys270. Residues 301 to 303, Ile306, 331 to 332, Met383, and Gly412 each bind S-adenosyl-L-methionine; these read GGD and TA.

This sequence in the N-terminal section; belongs to the precorrin-2 dehydrogenase / sirohydrochlorin ferrochelatase family. It in the C-terminal section; belongs to the precorrin methyltransferase family.

It catalyses the reaction uroporphyrinogen III + 2 S-adenosyl-L-methionine = precorrin-2 + 2 S-adenosyl-L-homocysteine + H(+). It carries out the reaction precorrin-2 + NAD(+) = sirohydrochlorin + NADH + 2 H(+). The catalysed reaction is siroheme + 2 H(+) = sirohydrochlorin + Fe(2+). It participates in cofactor biosynthesis; adenosylcobalamin biosynthesis; precorrin-2 from uroporphyrinogen III: step 1/1. The protein operates within cofactor biosynthesis; adenosylcobalamin biosynthesis; sirohydrochlorin from precorrin-2: step 1/1. It functions in the pathway porphyrin-containing compound metabolism; siroheme biosynthesis; precorrin-2 from uroporphyrinogen III: step 1/1. Its pathway is porphyrin-containing compound metabolism; siroheme biosynthesis; siroheme from sirohydrochlorin: step 1/1. It participates in porphyrin-containing compound metabolism; siroheme biosynthesis; sirohydrochlorin from precorrin-2: step 1/1. Its function is as follows. Multifunctional enzyme that catalyzes the SAM-dependent methylations of uroporphyrinogen III at position C-2 and C-7 to form precorrin-2 via precorrin-1. Then it catalyzes the NAD-dependent ring dehydrogenation of precorrin-2 to yield sirohydrochlorin. Finally, it catalyzes the ferrochelation of sirohydrochlorin to yield siroheme. This is Siroheme synthase from Pseudomonas savastanoi pv. phaseolicola (strain 1448A / Race 6) (Pseudomonas syringae pv. phaseolicola (strain 1448A / Race 6)).